A 186-amino-acid polypeptide reads, in one-letter code: Peptidyl-tRNA hydrolase (186 aa).

TRNA is bound at residue tyrosine 14. Histidine 19 functions as the Proton acceptor in the catalytic mechanism. Positions 64, 66, and 112 each coordinate tRNA.

This sequence belongs to the PTH family. Monomer.

It localises to the cytoplasm. The enzyme catalyses an N-acyl-L-alpha-aminoacyl-tRNA + H2O = an N-acyl-L-amino acid + a tRNA + H(+). Hydrolyzes ribosome-free peptidyl-tRNAs (with 1 or more amino acids incorporated), which drop off the ribosome during protein synthesis, or as a result of ribosome stalling. In terms of biological role, catalyzes the release of premature peptidyl moieties from peptidyl-tRNA molecules trapped in stalled 50S ribosomal subunits, and thus maintains levels of free tRNAs and 50S ribosomes. The protein is Peptidyl-tRNA hydrolase of Bacillus cereus (strain ATCC 10987 / NRS 248).